We begin with the raw amino-acid sequence, 183 residues long: Fetal and adult testis-expressed transcript protein (183 aa).

The disordered stretch occupies residues serine 42–arginine 66. The chain crosses the membrane as a helical span at residues threonine 163–methionine 181.

In terms of assembly, interacts with BIK and RNF183. Interacts with IMMT/MIC60and EMD. As to expression, testis-specific in fetus (aged from 6 to 11 weeks). In adult, expressed predominantly in testis, with some expression in lung, heart, kidney, adrenal gland and whole brain. Highly expressed in certain types of cancer tissues such as hepatocellular carcinoma, colon and gastric cancer. Weakly expressed in normal pancreas.

The protein resides in the mitochondrion. It is found in the mitochondrion outer membrane. Its subcellular location is the endoplasmic reticulum membrane. Its function is as follows. Involved in the regulation of endoplasmic reticulum (ER)-mitochondria coupling. Negatively regulates the ER-mitochondria distance and Ca(2+) transfer from ER to mitochondria possibly implicating it in the regulation of apoptosis. May collaborate with RNF183 to restrain BIK protein levels thus regulating apoptotic signaling. The protein is Fetal and adult testis-expressed transcript protein (FATE1) of Homo sapiens (Human).